We begin with the raw amino-acid sequence, 80 residues long: Protein KorB (80 aa).

2 consecutive DNA-binding regions (H-T-H motif) follow at residues Ala-13–Asp-32 and Asn-56–Glu-75.

Repressor for the transcription of certain pIJ101 promoters, including those the from kilA and kilB loci. In Streptomyces lividans, this protein is Protein KorB (korB).